Here is a 230-residue protein sequence, read N- to C-terminus: Ribonuclease 3 (230 aa).

Residues 5 to 125 (YSRFYNILGY…VIGAIYLDSD (121 aa)) form the RNase III domain. Residue Glu40 coordinates Mg(2+). Residue Asp44 is part of the active site. Positions 111 and 114 each coordinate Mg(2+). Glu114 is an active-site residue. Positions 153–223 (DSKSKLQEIL…AEKMIEMLSQ (71 aa)) constitute a DRBM domain.

The protein belongs to the ribonuclease III family. In terms of assembly, homodimer. Requires Mg(2+) as cofactor.

Its subcellular location is the cytoplasm. It carries out the reaction Endonucleolytic cleavage to 5'-phosphomonoester.. In terms of biological role, digests double-stranded RNA. Involved in the processing of primary rRNA transcript to yield the immediate precursors to the large and small rRNAs (23S and 16S). Processes some mRNAs, and tRNAs when they are encoded in the rRNA operon. Processes pre-crRNA and tracrRNA of type II CRISPR loci if present in the organism. The protein is Ribonuclease 3 of Francisella tularensis subsp. holarctica (strain OSU18).